The sequence spans 113 residues: Probable leucocin-A immunity protein (113 aa).

It belongs to the immunity protein EntA family.

Imparts immunity to leucocin-A to naturally sensitive host strains. This chain is Probable leucocin-A immunity protein, found in Leuconostoc gelidum.